The following is a 674-amino-acid chain: MARAHWGCCPWLVLLCACAWGHTKPVDLGGQDVRNCSTNPPYLPVTVVNTTMSLTALRQQMQTQNLSAYIIPGTDAHMNEYIGQHDERRAWITGFTGSAGTAVVTMKKAAVWTDSRYWTQAERQMDCNWELHKEVGTTPIVTWLLTEIPAGGRVGFDPFLLSIDTWESYDLALQGSNRQLVSITTNLVDLVWGSERPPVPNQPIYALQEAFTGSTWQEKVSGVRSQMQKHQKVPTAVLLSALEETAWLFNLRASDIPYNPFFYSYTLLTDSSIRLFANKSRFSSETLSYLNSSCTGPMCVQIEDYSQVRDSIQAYSLGDVRIWIGTSYTMYGIYEMIPKEKLVTDTYSPVMMTKAVKNSKEQALLKASHVRDAVAVIRYLVWLEKNVPKGTVDEFSGAEIVDKFRGEEQFSSGPSFETISASGLNAALAHYSPTKELNRKLSSDEMYLLDSGGQYWDGTTDITRTVHWGTPSAFQKEAYTRVLIGNIDLSRLIFPAATSGRMVEAFARRALWDAGLNYGHGTGHGIGNFLCVHEWPVGFQSNNIAMAKGMFTSIEPGYYKDGEFGIRLEDVALVVEAKTKYPGSYLTFEVVSFVPYDRNLIDVSLLSPEHLQYLNRYYQTIREKVGPELQRRQLLEEFEWLQQHTEPLAARAPDTASWASVLVVSTLAILGWSV.

The N-terminal stretch at 1–21 is a signal peptide; it reads MARAHWGCCPWLVLLCACAWG. N-linked (GlcNAc...) asparagine glycosylation is found at Asn35, Asn49, and Asn65. Arg116 provides a ligand contact to substrate. 2 N-linked (GlcNAc...) asparagine glycosylation sites follow: Asn278 and Asn291. His430 serves as a coordination point for substrate. Zn(2+) is bound by residues Asp450, Asp461, and His524. Substrate-binding residues include His524, His533, and Glu555. The Zn(2+) site is built by Glu555 and Glu569. The GPI-anchor amidated alanine moiety is linked to residue Ala649. A propeptide spans 650 to 674 (removed in mature form); the sequence is ARAPDTASWASVLVVSTLAILGWSV.

It belongs to the peptidase M24B family. As to quaternary structure, homotrimer. It depends on Zn(2+) as a cofactor. N-glycosylated. As to expression, expressed in kidney, lung, heart, placenta, liver, small intestine and colon. No expression in brain, skeletal muscle, pancreas, spleen, thymus, prostate, testis and ovary.

It is found in the cell membrane. The catalysed reaction is Release of any N-terminal amino acid, including proline, that is linked to proline, even from a dipeptide or tripeptide.. Inhibited by apstatin and the chelating agent 1,10-phenanthroline. Also inhibited by high concentrations of Zn(2+). Not significantly inhibited by bestatin or phosphoramidon. Membrane-bound metalloprotease which catalyzes the removal of a penultimate prolyl residue from the N-termini of peptides, such as Arg-Pro-Pro. May play a role in the metabolism of the vasodilator bradykinin. The protein is Xaa-Pro aminopeptidase 2 (XPNPEP2) of Homo sapiens (Human).